Consider the following 487-residue polypeptide: N-succinylglutamate 5-semialdehyde dehydrogenase (487 aa).

221-226 contacts NAD(+); sequence GSSDTG. Active-site residues include Glu244 and Cys278.

Belongs to the aldehyde dehydrogenase family. AstD subfamily.

It carries out the reaction N-succinyl-L-glutamate 5-semialdehyde + NAD(+) + H2O = N-succinyl-L-glutamate + NADH + 2 H(+). It functions in the pathway amino-acid degradation; L-arginine degradation via AST pathway; L-glutamate and succinate from L-arginine: step 4/5. In terms of biological role, catalyzes the NAD-dependent reduction of succinylglutamate semialdehyde into succinylglutamate. The sequence is that of N-succinylglutamate 5-semialdehyde dehydrogenase from Burkholderia pseudomallei (strain 1106a).